Reading from the N-terminus, the 431-residue chain is Adenosylhomocysteinase (431 aa).

Threonine 56, aspartate 131, and glutamate 156 together coordinate substrate. 157-159 (TTT) provides a ligand contact to NAD(+). Residues lysine 186 and aspartate 190 each contribute to the substrate site. Residues asparagine 191, 222–227 (GDVGKG), glutamate 243, 299–301 (IGH), and asparagine 345 contribute to the NAD(+) site.

This sequence belongs to the adenosylhomocysteinase family. Homotetramer. The cofactor is NAD(+).

The enzyme catalyses S-adenosyl-L-homocysteine + H2O = L-homocysteine + adenosine. It functions in the pathway amino-acid biosynthesis; L-homocysteine biosynthesis; L-homocysteine from S-adenosyl-L-homocysteine: step 1/1. In terms of biological role, adenosylhomocysteine is a competitive inhibitor of S-adenosyl-L-methionine-dependent methyl transferase reactions; therefore adenosylhomocysteinase may play a key role in the control of methylations via regulation of the intracellular concentration of adenosylhomocysteine. This chain is Adenosylhomocysteinase (sahA), found in Dictyostelium discoideum (Social amoeba).